A 264-amino-acid chain; its full sequence is MKPYLELLQHVLEYGAEKSDRTGTGTRSVFGWQMRFDLNAGFPLVTTKKLHLRSIIHELLWFLQGDTNIAYLKDNQVRIWDEWADANGDLGPVYGKQWRRWTGPDGVEIDQMQWLVDEIKRNPDSRRLVISAWNVGELPQMALMPCHSLFQFYVVDGKLSCQLYQRSGDIFLGVPFNIASYALLTHMVAQATGLGVGDFVHTLGDAHLYSNHFEQAREQLTRTPRPLPTLRLNPDVTDLFAFRFEDIAIDGYDPHPAIKAPVAV.

Arginine 21 contacts dUMP. Histidine 51 lines the (6R)-5,10-methylene-5,6,7,8-tetrahydrofolate pocket. 126–127 (RR) contacts dUMP. The Nucleophile role is filled by cysteine 146. Residues 166–169 (RSGD), asparagine 177, and 207–209 (HLY) each bind dUMP. Aspartate 169 contributes to the (6R)-5,10-methylene-5,6,7,8-tetrahydrofolate binding site. A (6R)-5,10-methylene-5,6,7,8-tetrahydrofolate-binding site is contributed by alanine 263.

It belongs to the thymidylate synthase family. Bacterial-type ThyA subfamily. Homodimer.

Its subcellular location is the cytoplasm. It catalyses the reaction dUMP + (6R)-5,10-methylene-5,6,7,8-tetrahydrofolate = 7,8-dihydrofolate + dTMP. It participates in pyrimidine metabolism; dTTP biosynthesis. Functionally, catalyzes the reductive methylation of 2'-deoxyuridine-5'-monophosphate (dUMP) to 2'-deoxythymidine-5'-monophosphate (dTMP) while utilizing 5,10-methylenetetrahydrofolate (mTHF) as the methyl donor and reductant in the reaction, yielding dihydrofolate (DHF) as a by-product. This enzymatic reaction provides an intracellular de novo source of dTMP, an essential precursor for DNA biosynthesis. This is Thymidylate synthase from Xanthomonas campestris pv. campestris (strain 8004).